We begin with the raw amino-acid sequence, 295 residues long: Trimeric intracellular cation channel type A (295 aa).

Residues 1-18 lie on the Lumenal side of the membrane; sequence MELLSALSLGELALSFSR. A helical transmembrane segment spans residues 19-39; it reads VPLFPVFDLSYFIVSILYLKY. At 40-51 the chain is on the cytoplasmic side; the sequence is EPGAVELSRRHP. The chain crosses the membrane as a helical span at residues 52 to 72; that stretch reads VASWLCAMLHCFGSYILADLL. Over 73 to 85 the chain is Lumenal; sequence LGEPLIDYFSNNS. Glycine 74 is a binding site for Ca(2+). The helical transmembrane segment at 86-106 threads the bilayer; the sequence is SILLASAVWYLIFFCPLDLFY. At 107–144 the chain is on the cytoplasmic side; it reads KCVCFLPVKLIFVAMKEVVRVRKIAVGIHHAHHHYHHG. Residues lysine 122 and arginine 126 each coordinate a 1,2-diacyl-sn-glycero-3-phospho-(1D-myo-inositol-4,5-bisphosphate). The chain crosses the membrane as a helical span at residues 145-165; that stretch reads WFIMIATGWVKGSGVALLSNV. Over 166–178 the chain is Lumenal; the sequence is EQLLRGVWKPETN. The helical transmembrane segment at 179-199 threads the bilayer; sequence EILHMSFPTKASLYGAILFTL. At 200–209 the chain is on the cytoplasmic side; sequence QQTRWLPVSK. The helical transmembrane segment at 210 to 230 threads the bilayer; the sequence is ASLIFIFTMFMVSCKVFLTAT. At 231–234 the chain is on the lumenal side; it reads HSHS. The chain crosses the membrane as a helical span at residues 235-255; it reads SPFDVLEAYVCPVLFGTGSGG. Residues 256–295 are Cytoplasmic-facing; it reads DHPQDNHGAWPGGPPSGALATKSKEELSEGSRKKKTKKAD. Residues 256 to 295 form a disordered region; sequence DHPQDNHGAWPGGPPSGALATKSKEELSEGSRKKKTKKAD. The span at 277 to 286 shows a compositional bias: basic and acidic residues; it reads KSKEELSEGS.

This sequence belongs to the TMEM38 family. As to quaternary structure, homotrimer; conformation seems to be controled by binding to diacylglycerol (DAG).

It is found in the sarcoplasmic reticulum membrane. Its subcellular location is the nucleus membrane. The enzyme catalyses K(+)(in) = K(+)(out). Its activity is regulated as follows. Channel activity is activated by a change of voltage within the sarcoplasmic reticulum lumen and blocked by luminal high Ca(2+) levels. Intracellular monovalent cation channel required for maintenance of rapid intracellular calcium release. Acts as a potassium counter-ion channel that functions in synchronization with calcium release from intracellular stores. Opened by a change of voltage within the sarcoplasmic reticulum lumen. This chain is Trimeric intracellular cation channel type A, found in Oryctolagus cuniculus (Rabbit).